A 115-amino-acid polypeptide reads, in one-letter code: Large ribosomal subunit protein uL22 (115 aa).

It belongs to the universal ribosomal protein uL22 family. Part of the 50S ribosomal subunit.

In terms of biological role, this protein binds specifically to 23S rRNA; its binding is stimulated by other ribosomal proteins, e.g. L4, L17, and L20. It is important during the early stages of 50S assembly. It makes multiple contacts with different domains of the 23S rRNA in the assembled 50S subunit and ribosome. The globular domain of the protein is located near the polypeptide exit tunnel on the outside of the subunit, while an extended beta-hairpin is found that lines the wall of the exit tunnel in the center of the 70S ribosome. The protein is Large ribosomal subunit protein uL22 of Lactococcus lactis subsp. lactis (strain IL1403) (Streptococcus lactis).